Consider the following 1630-residue polypeptide: Transient receptor potential cation channel subfamily M member 1 (1630 aa).

Disordered stretches follow at residues 1-25 (MGSM…GSQK), 65-92 (PLPS…SVSK), 453-492 (APPV…EVEE), 620-643 (LGME…EEEI), and 824-858 (SKEN…HKKQ). At 1–877 (MGSMRKMSSS…CEFYNAPIVK (877 aa)) the chain is on the cytoplasmic side. Over residues 8-25 (SSSFKRGSIKSSTSGSQK) the composition is skewed to low complexity. The segment covering 69–92 (VTPSSTAEDTKQGDAQSGKWSVSK) has biased composition (polar residues). A compositionally biased stretch (basic residues) spans 474–485 (GRGKGKGKKKGK). Basic and acidic residues-rich tracts occupy residues 825 to 834 (KENEDGKEKE) and 845 to 855 (GSRKGDEENEH). The chain crosses the membrane as a helical span at residues 878-898 (FWFYTISYLGYLLLFNYVILV). The Extracellular segment spans residues 899–944 (RMDGWPSPQEWIVISYIVSLALEKIREILMSEPGKLSQKIKVWLQE). A helical transmembrane segment spans residues 945 to 965 (YWNITDLVAISMFMVGAILRL). Over 966 to 975 (QNQPYMGYGR) the chain is Cytoplasmic. Residues 976–996 (VIYCVDIILWYIRVLDIFGVN) traverse the membrane as a helical segment. At 997-1008 (KYLGPYVMMIGK) the chain is on the extracellular side. Residues 1009 to 1029 (MMIDMLYFVVIMLVVLMSFGV) form a helical membrane-spanning segment. The Cytoplasmic segment spans residues 1030–1107 (ARQAILHPEE…CIPGAWLTPA (78 aa)). A helical membrane pass occupies residues 1108–1128 (LMACYLLVANILLVNLLIAVF). N-linked (GlcNAc...) asparagine glycosylation is present at N1129. Topologically, residues 1129-1158 (NNTFFEVKSISNQVWKFQRYQLIMTFHDRP) are extracellular. The helical transmembrane segment at 1159–1179 (VLPPPMIILSHIYIIVMRLSG) threads the bilayer. Topologically, residues 1180 to 1630 (RCRKKREGDQ…QEKGNPETEC (451 aa)) are cytoplasmic. Positions 1235–1255 (IRVTSERVENMSMRLEEINER) form a coiled coil. Disordered stretches follow at residues 1362–1414 (EDVK…AGEL) and 1575–1630 (CLRS…ETEC).

This sequence belongs to the transient receptor (TC 1.A.4) family. LTrpC subfamily. TRPM1 sub-subfamily. As to quaternary structure, interacts with TRPM3; the interaction results in the formation of a heteromultimeric cation channel complex that are functionally different from the homomeric channels. Interacts with GPR179. Associates with both guanine nucleotide-binding proteins G(o) and beta-gamma G protein dimer; implicated in directly regulating TRPM1 channel open-state.

It is found in the cell membrane. The protein localises to the endoplasmic reticulum membrane. Its subcellular location is the cell projection. It localises to the axon. The catalysed reaction is Ca(2+)(in) = Ca(2+)(out). The enzyme catalyses Mg(2+)(in) = Mg(2+)(out). It catalyses the reaction Mn(2+)(in) = Mn(2+)(out). It carries out the reaction Ni(2+)(in) = Ni(2+)(out). Inhibited by extracellular zinc ions. Inhibited by intracellular Mg(2+). Activated by the neuroactive steroid pregnenolone sulfate. Negatively regulated by activation of GRM6 receptors in the ON-bipolar cells. Its function is as follows. Constitutively open nonselective divalent cation-conducting channels which mediate the influx of Ca(2+), Mg(2+), Mn(2+), Ba(2+), and Ni(2+) into the cytoplasm, leading to membrane depolarization. Impermeable to zinc ions. In addition, forms heteromultimeric ion channels with TRPM3 which are permeable for calcium and zinc ions. Plays an essential role for the depolarizing photoresponse of retinal ON bipolar cells. In the dark, tonic release of glutamate activates the G-protein coupled receptor for glutamate GRM6, its activation induces the release of G(o) protein and the beta-gamma G protein dimer. Both subunits can interact and inactivate the TRPM1 channel. A light onset, induces decrease in glutamate release and deactivation of GRM6 leading to channel opening and membrane depolarization. May play a role in metastasis suppression. The polypeptide is Transient receptor potential cation channel subfamily M member 1 (Rattus norvegicus (Rat)).